The primary structure comprises 107 residues: U1-lycotoxin-Ls1k (107 aa).

The N-terminal stretch at 1–20 (MMKVLVVVALLVTLISYSSS) is a signal peptide. A propeptide spanning residues 21 to 41 (EGIDDLEADELLSLMANEQTR) is cleaved from the precursor. Cystine bridges form between Cys-44/Cys-59, Cys-51/Cys-68, Cys-58/Cys-86, and Cys-70/Cys-84.

Belongs to the neurotoxin 19 (CSTX) family. 04 (U1-Lctx) subfamily. Expressed by the venom gland.

Its subcellular location is the secreted. This is U1-lycotoxin-Ls1k from Lycosa singoriensis (Wolf spider).